A 331-amino-acid polypeptide reads, in one-letter code: Ketol-acid reductoisomerase (NADP(+)) (331 aa).

Positions 2–182 (AKLFYDSDAD…GGTRAGILET (181 aa)) constitute a KARI N-terminal Rossmann domain. Residues 25-28 (YGSQ), Ser-51, Ser-53, and 83-86 (DEFQ) contribute to the NADP(+) site. Residue His-108 is part of the active site. Gly-134 lines the NADP(+) pocket. The region spanning 183–328 (NFKEETETDL…KTLRSMFSWL (146 aa)) is the KARI C-terminal knotted domain. The Mg(2+) site is built by Asp-191, Glu-195, Glu-227, and Glu-231. Ser-252 lines the substrate pocket.

This sequence belongs to the ketol-acid reductoisomerase family. Mg(2+) serves as cofactor.

The enzyme catalyses (2R)-2,3-dihydroxy-3-methylbutanoate + NADP(+) = (2S)-2-acetolactate + NADPH + H(+). It catalyses the reaction (2R,3R)-2,3-dihydroxy-3-methylpentanoate + NADP(+) = (S)-2-ethyl-2-hydroxy-3-oxobutanoate + NADPH + H(+). Its pathway is amino-acid biosynthesis; L-isoleucine biosynthesis; L-isoleucine from 2-oxobutanoate: step 2/4. It functions in the pathway amino-acid biosynthesis; L-valine biosynthesis; L-valine from pyruvate: step 2/4. Functionally, involved in the biosynthesis of branched-chain amino acids (BCAA). Catalyzes an alkyl-migration followed by a ketol-acid reduction of (S)-2-acetolactate (S2AL) to yield (R)-2,3-dihydroxy-isovalerate. In the isomerase reaction, S2AL is rearranged via a Mg-dependent methyl migration to produce 3-hydroxy-3-methyl-2-ketobutyrate (HMKB). In the reductase reaction, this 2-ketoacid undergoes a metal-dependent reduction by NADPH to yield (R)-2,3-dihydroxy-isovalerate. The protein is Ketol-acid reductoisomerase (NADP(+)) of Prochlorococcus marinus (strain NATL2A).